The primary structure comprises 388 residues: Transposase for insertion sequence element IS406 (388 aa).

This sequence belongs to the transposase mutator family.

Its function is as follows. Required for the transposition of the insertion element. In Burkholderia multivorans (strain ATCC 17616 / 249), this protein is Transposase for insertion sequence element IS406.